Reading from the N-terminus, the 159-residue chain is MNLRRKNRLWVVCAVLAGLGLTTALVLYALRANIDLFYTPGEILYGKRETQQLPAAGQRLRVGGMVMPGSVRRDPDSLKVNFSLYDAEGSVTVSYEGILPDLFREGQGVVVQGTLEKGNHVLAHEVLAKHDENYTPPEVEKAMQENHRRPQRADKDTSS.

At 1–8 (MNLRRKNR) the chain is on the cytoplasmic side. A helical; Signal-anchor for type II membrane protein membrane pass occupies residues 9 to 29 (LWVVCAVLAGLGLTTALVLYA). The Periplasmic portion of the chain corresponds to 30-159 (LRANIDLFYT…PQRADKDTSS (130 aa)). Positions 129–159 (KHDENYTPPEVEKAMQENHRRPQRADKDTSS) are disordered. Residues H130 and Y134 each contribute to the heme site.

It belongs to the CcmE/CycJ family.

The protein localises to the cell inner membrane. Heme chaperone required for the biogenesis of c-type cytochromes. Transiently binds heme delivered by CcmC and transfers the heme to apo-cytochromes in a process facilitated by CcmF and CcmH. The chain is Cytochrome c-type biogenesis protein CcmE from Salmonella typhimurium (strain LT2 / SGSC1412 / ATCC 700720).